A 256-amino-acid polypeptide reads, in one-letter code: uncharacterized protein (256 aa).

This sequence belongs to the metallo-beta-lactamase superfamily.

This is an uncharacterized protein from Methanocaldococcus jannaschii (strain ATCC 43067 / DSM 2661 / JAL-1 / JCM 10045 / NBRC 100440) (Methanococcus jannaschii).